A 683-amino-acid polypeptide reads, in one-letter code: Solute carrier organic anion transporter family member 2B1 (683 aa).

The interval 1 to 30 (MPDRSTKTTMGTEDMHERKVSVEPQDSHQD) is disordered. Topologically, residues 1–41 (MPDRSTKTTMGTEDMHERKVSVEPQDSHQDAQPRGMFHNIK) are cytoplasmic. A compositionally biased stretch (basic and acidic residues) spans 13–30 (EDMHERKVSVEPQDSHQD). Ser21 carries the post-translational modification Phosphoserine. The helical transmembrane segment at 42-61 (FFVLCHSLLQLTQLMISGYL) threads the bilayer. Topologically, residues 62–80 (KSSISTVEKRFGLSSQISG) are extracellular. Residues 81-101 (LLAAFNEVGNVSLILFVSYFG) traverse the membrane as a helical segment. Over 102-107 (SRVHRP) the chain is Cytoplasmic. Residues 108–132 (RMIGYGALLVATAGLLMALPHFISE) traverse the membrane as a helical segment. Topologically, residues 133–177 (PYRYDHSSSDNRSLDFEASLCLPTTMAPASALSNGSCSSHTETKH) are extracellular. 2 N-linked (GlcNAc...) asparagine glycosylation sites follow: Asn143 and Asn166. A helical transmembrane segment spans residues 178-207 (LTMVGIMFAAQTLLGIGGVPIQPFGISYID). Residues 208–226 (DFAHHSNSPLYIGILFGIT) are Cytoplasmic-facing. A helical transmembrane segment spans residues 227–247 (TMGPGLAYGLGSLMLRLYVDI). Topologically, residues 248–265 (DRMPEGGINLTPKDPRWV) are extracellular. Residues 266 to 290 (GAWWLGFLISSGLVVLASSPYFFFP) form a helical membrane-spanning segment. The Cytoplasmic segment spans residues 291–355 (REMPKEKHEF…VKVFPRVLLR (65 aa)). 2 positions are modified to phosphoserine: Ser312 and Ser315. The chain crosses the membrane as a helical span at residues 356-377 (NLRHPIFLLVVLSQVCTSSMVA). Over 378 to 397 (GMATFLPKFLERQFSITASF) the chain is Extracellular. A helical transmembrane segment spans residues 398 to 421 (ANMLLGCLTIPLVIVGIMMGGVLV). Over 422 to 425 (KRLH) the chain is Cytoplasmic. The helical transmembrane segment at 426-449 (LSPVQCSALCLLGSLLCLLFSVPL) threads the bilayer. Topologically, residues 450 to 553 (FFIGCSTHQI…SACSRLVLPF (104 aa)) are extracellular. A Kazal-like domain is found at 472–532 (PSLFPGCSEP…VFYTNCSCVA (61 aa)). Cystine bridges form between Cys478–Cys509, Cys484–Cys505, and Cys493–Cys530. Residues Asn527 and Asn534 are each glycosylated (N-linked (GlcNAc...) asparagine). The helical transmembrane segment at 554–576 (IVLFSLGAGLASITHTPSFMLIL) threads the bilayer. The Cytoplasmic segment spans residues 577–585 (RGVKKEDKT). Residues 586 to 611 (LAVGMQFMLLRVLAWMPSPVIHGSAI) form a helical membrane-spanning segment. Residues 612 to 644 (DTTCVHWALTCGRRAVCRYYDHDLLRNRFIGLQ) lie on the Extracellular side of the membrane. Residues 645–662 (FFFKSGSLVCFTLVLAIL) traverse the membrane as a helical segment. Over 663–683 (RQQSREASTRTTVKSSELQQL) the chain is Cytoplasmic.

Belongs to the organo anion transporter (TC 2.A.60) family. Expressed in liver, kidney, small intestine mucosa, large intestine, brain, lung, spleen, stomach and heart.

It localises to the cell membrane. The protein resides in the basal cell membrane. The protein localises to the apical cell membrane. The enzyme catalyses dehydroepiandrosterone 3-sulfate(out) = dehydroepiandrosterone 3-sulfate(in). The catalysed reaction is estrone 3-sulfate(out) = estrone 3-sulfate(in). It carries out the reaction estrone 3-sulfate(out) + hydrogencarbonate(in) = estrone 3-sulfate(in) + hydrogencarbonate(out). It catalyses the reaction taurocholate(out) = taurocholate(in). The enzyme catalyses coproporphyrin III(out) = coproporphyrin III(in). The catalysed reaction is substance P(out) = substance P(in). It carries out the reaction pregnenolone sulfate(out) = pregnenolone sulfate(in). It catalyses the reaction prostaglandin E2(out) = prostaglandin E2(in). The enzyme catalyses prostaglandin D2(out) = prostaglandin D2(in). The catalysed reaction is L-thyroxine(out) = L-thyroxine(in). Its function is as follows. Mediates the Na(+)-independent transport of steroid sulfate conjugates such as estrone 3-sulfate (E1S), dehydroepiandrosterone sulfate (DHEA-S) and pregnenolone sulfate (PregS) and other specific organic anions. Responsible for the transport of E1S through the basal membrane of syncytiotrophoblast, highlighting a potential role in the placental absorption of fetal-derived sulfated steroids including DHEA-S. Also facilitates the uptake of sulfated steroids at the basal/sinusoidal membrane of hepatocytes, therefore accounting for the major part of organic anions clearance of liver. Mediates the intestinal uptake of sulfated steroids. Mediates the uptake of the neurosteroids DHEA-S and PregS into the endothelial cells of the blood-brain barrier as the first step to enter the brain. Also plays a role in the reuptake of neuropeptides such as substance P/TAC1 and vasoactive intestinal peptide/VIP released from retinal neurons. May act as a heme transporter that promotes cellular iron availability. Also transports heme by-product coproporphyrin III (CPIII), and may be involved in their hepatic disposition. Mediates the uptake of other substrates such as prostaglandins D2 (PGD2), E1 (PGE1) and E2 (PGE2), taurocholate, L-thyroxine, leukotriene C4 and thromboxane B2. May contribute to regulate the transport of organic compounds in testis across the blood-testis-barrier. Shows a pH-sensitive substrate specificity which may be ascribed to the protonation state of the binding site and leads to a stimulation of substrate transport in an acidic microenvironment. The exact transport mechanism has not been yet deciphered but most likely involves an anion exchange, coupling the cellular uptake of organic substrate with the efflux of an anionic compound. Hydrogencarbonate/HCO3(-) acts as a probable counteranion that exchanges for organic anions. Cytoplasmic glutamate may also act as counteranion in the placenta. An inwardly directed proton gradient has also been proposed as the driving force of E1S uptake with a (H(+):E1S) stoichiometry of (1:1). This Mus musculus (Mouse) protein is Solute carrier organic anion transporter family member 2B1.